A 616-amino-acid chain; its full sequence is Chaperone protein HscA (616 aa).

It belongs to the heat shock protein 70 family.

Its function is as follows. Chaperone involved in the maturation of iron-sulfur cluster-containing proteins. Has a low intrinsic ATPase activity which is markedly stimulated by HscB. Involved in the maturation of IscU. The polypeptide is Chaperone protein HscA (Shigella flexneri serotype 5b (strain 8401)).